The following is a 485-amino-acid chain: Zinc finger protein 639 (485 aa).

Positions 1 to 14 (MNEYPKKRKRKTLH) are enriched in basic residues. Disordered regions lie at residues 1–23 (MNEY…DSSG) and 54–80 (DNKD…ARNR). Residue Ser-60 is modified to Phosphoserine. Lys-76 participates in a covalent cross-link: Glycyl lysine isopeptide (Lys-Gly) (interchain with G-Cter in SUMO2). Ser-88 is modified (phosphoserine). Residues 115-136 (ASPESVHQHTQEESPIEVHTSE) form a disordered region. Residues Lys-177, Lys-181, and Lys-226 each participate in a glycyl lysine isopeptide (Lys-Gly) (interchain with G-Cter in SUMO2) cross-link. 8 consecutive C2H2-type zinc fingers follow at residues 204-227 (YKCE…ILKH), 233-255 (NVCR…AKLH), 260-283 (YICK…ADTH), 289-311 (YWCE…FQEH), 374-397 (FVCQ…AIEH), 403-425 (HVCD…LNSH), 431-454 (YLCQ…DFKH), and 460-482 (HKCS…LQVH). Residues 371-455 (KNFFVCQVCG…LKIHLDFKHS (85 aa)) form an interaction with CTNNA2 region.

Belongs to the krueppel C2H2-type zinc-finger protein family. Interacts with CTNNA2.

The protein localises to the nucleus. Binds DNA and may function as a transcriptional repressor. This is Zinc finger protein 639 (Znf639) from Mus musculus (Mouse).